The sequence spans 700 residues: Elongation factor G (700 aa).

The tr-type G domain maps to 8-290 (ERYRNIGISA…AVIDYLPAPT (283 aa)). Residues 17-24 (AHIDAGKT), 88-92 (DTPGH), and 142-145 (NKMD) contribute to the GTP site.

Belongs to the TRAFAC class translation factor GTPase superfamily. Classic translation factor GTPase family. EF-G/EF-2 subfamily.

Its subcellular location is the cytoplasm. Its function is as follows. Catalyzes the GTP-dependent ribosomal translocation step during translation elongation. During this step, the ribosome changes from the pre-translocational (PRE) to the post-translocational (POST) state as the newly formed A-site-bound peptidyl-tRNA and P-site-bound deacylated tRNA move to the P and E sites, respectively. Catalyzes the coordinated movement of the two tRNA molecules, the mRNA and conformational changes in the ribosome. In Glaesserella parasuis serovar 5 (strain SH0165) (Haemophilus parasuis), this protein is Elongation factor G.